Consider the following 421-residue polypeptide: 3-isopropylmalate dehydratase large subunit (421 aa).

The [4Fe-4S] cluster site is built by Cys300, Cys360, and Cys363.

This sequence belongs to the aconitase/IPM isomerase family. LeuC type 2 subfamily. In terms of assembly, heterodimer of LeuC and LeuD. [4Fe-4S] cluster is required as a cofactor.

The catalysed reaction is (2R,3S)-3-isopropylmalate = (2S)-2-isopropylmalate. The protein operates within amino-acid biosynthesis; L-leucine biosynthesis; L-leucine from 3-methyl-2-oxobutanoate: step 2/4. Its function is as follows. Catalyzes the isomerization between 2-isopropylmalate and 3-isopropylmalate, via the formation of 2-isopropylmaleate. This Moorella thermoacetica (strain ATCC 39073 / JCM 9320) protein is 3-isopropylmalate dehydratase large subunit.